A 426-amino-acid polypeptide reads, in one-letter code: Serine--tRNA ligase (426 aa).

T233 to E235 contacts L-serine. Residue R264–E266 coordinates ATP. E287 contacts L-serine. ATP is bound at residue E351–S354. S387 provides a ligand contact to L-serine.

Belongs to the class-II aminoacyl-tRNA synthetase family. Type-1 seryl-tRNA synthetase subfamily. Homodimer. The tRNA molecule binds across the dimer.

Its subcellular location is the cytoplasm. The enzyme catalyses tRNA(Ser) + L-serine + ATP = L-seryl-tRNA(Ser) + AMP + diphosphate + H(+). It carries out the reaction tRNA(Sec) + L-serine + ATP = L-seryl-tRNA(Sec) + AMP + diphosphate + H(+). Its pathway is aminoacyl-tRNA biosynthesis; selenocysteinyl-tRNA(Sec) biosynthesis; L-seryl-tRNA(Sec) from L-serine and tRNA(Sec): step 1/1. Functionally, catalyzes the attachment of serine to tRNA(Ser). Is also able to aminoacylate tRNA(Sec) with serine, to form the misacylated tRNA L-seryl-tRNA(Sec), which will be further converted into selenocysteinyl-tRNA(Sec). This chain is Serine--tRNA ligase, found in Pseudomonas putida (strain GB-1).